Reading from the N-terminus, the 490-residue chain is GTPase Der (490 aa).

EngA-type G domains lie at 3–166 (PVVA…MEDL) and 203–376 (IKLA…DSST). GTP is bound by residues 9 to 16 (GRPNVGKS), 56 to 60 (DTGGI), 118 to 121 (NKTD), 209 to 216 (GRPNVGKS), 256 to 260 (DTAGV), and 321 to 324 (NKWD). The KH-like domain maps to 377–461 (RRVGTSMLTR…PIRIQFKEGE (85 aa)).

It belongs to the TRAFAC class TrmE-Era-EngA-EngB-Septin-like GTPase superfamily. EngA (Der) GTPase family. Associates with the 50S ribosomal subunit.

Its function is as follows. GTPase that plays an essential role in the late steps of ribosome biogenesis. The protein is GTPase Der of Shigella flexneri serotype 5b (strain 8401).